The chain runs to 355 residues: Poly(3-hydroxyalkanoate) polymerase subunit PhaC (355 aa).

The AB hydrolase-1 domain occupies 68–333 (PLLIVYALVN…LAFPGGHIGI (266 aa)). Cys148 is an active-site residue.

Belongs to the PHA/PHB synthase family. Type III PhaC subfamily. As to quaternary structure, forms a heterodimer with PhaE, which may multimerize in the presence of 3-hydroxybutyryl-CoA.

Its subcellular location is the cytoplasm. The catalysed reaction is (3R)-3-hydroxybutanoyl-CoA + [(3R)-hydroxybutanoate](n) = [(3R)-hydroxybutanoate](n+1) + CoA. It functions in the pathway biopolymer metabolism; poly-(R)-3-hydroxybutanoate biosynthesis. Polymerizes D(-)-3-hydroxybutyryl-CoA to create PHB which consists of thousands of hydroxybutyrate molecules linked end to end. PHB serves as an intracellular energy reserve material when cells grow under conditions of nutrient limitation. In Thiocystis violacea, this protein is Poly(3-hydroxyalkanoate) polymerase subunit PhaC.